A 631-amino-acid polypeptide reads, in one-letter code: Chaperone protein DnaK (631 aa).

Thr-197 carries the post-translational modification Phosphothreonine; by autocatalysis. Residues 598 to 631 form a disordered region; that stretch reads MYKKEQGQTGGTEQGGTEQKKSGGDDDVIDAEVE. Positions 622–631 are enriched in acidic residues; that stretch reads DDDVIDAEVE.

It belongs to the heat shock protein 70 family.

Its function is as follows. Acts as a chaperone. In Nitratiruptor sp. (strain SB155-2), this protein is Chaperone protein DnaK.